Consider the following 582-residue polypeptide: Methionine--tRNA ligase (582 aa).

A 'HIGH' region motif is present at residues 24–34; that stretch reads PYIYAVPHLGN. Zn(2+) contacts are provided by C156, C159, C169, and C172. Residues 346–350 carry the 'KMSKS' region motif; sequence KFSKS. K349 lines the ATP pocket.

The protein belongs to the class-I aminoacyl-tRNA synthetase family. MetG type 1 subfamily. It depends on Zn(2+) as a cofactor.

It is found in the cytoplasm. The enzyme catalyses tRNA(Met) + L-methionine + ATP = L-methionyl-tRNA(Met) + AMP + diphosphate. Is required not only for elongation of protein synthesis but also for the initiation of all mRNA translation through initiator tRNA(fMet) aminoacylation. The protein is Methionine--tRNA ligase of Caldivirga maquilingensis (strain ATCC 700844 / DSM 13496 / JCM 10307 / IC-167).